A 602-amino-acid chain; its full sequence is Elongation factor 4 (602 aa).

Residues R6–A188 form the tr-type G domain. GTP-binding positions include D18–T23 and N135–D138.

This sequence belongs to the TRAFAC class translation factor GTPase superfamily. Classic translation factor GTPase family. LepA subfamily.

The protein localises to the cell membrane. It carries out the reaction GTP + H2O = GDP + phosphate + H(+). In terms of biological role, required for accurate and efficient protein synthesis under certain stress conditions. May act as a fidelity factor of the translation reaction, by catalyzing a one-codon backward translocation of tRNAs on improperly translocated ribosomes. Back-translocation proceeds from a post-translocation (POST) complex to a pre-translocation (PRE) complex, thus giving elongation factor G a second chance to translocate the tRNAs correctly. Binds to ribosomes in a GTP-dependent manner. The sequence is that of Elongation factor 4 from Oceanobacillus iheyensis (strain DSM 14371 / CIP 107618 / JCM 11309 / KCTC 3954 / HTE831).